We begin with the raw amino-acid sequence, 382 residues long: Galactokinase (382 aa).

A substrate-binding site is contributed by 34-37 (EHTD). Residue 124–130 (GAGLSSS) participates in ATP binding. Mg(2+) is bound by residues serine 130 and glutamate 162. Catalysis depends on aspartate 174, which acts as the Proton acceptor. Tyrosine 223 contacts substrate.

This sequence belongs to the GHMP kinase family. GalK subfamily.

The protein resides in the cytoplasm. It catalyses the reaction alpha-D-galactose + ATP = alpha-D-galactose 1-phosphate + ADP + H(+). It participates in carbohydrate metabolism; galactose metabolism. Functionally, catalyzes the transfer of the gamma-phosphate of ATP to D-galactose to form alpha-D-galactose-1-phosphate (Gal-1-P). This chain is Galactokinase, found in Salmonella agona (strain SL483).